The primary structure comprises 206 residues: Small ribosomal subunit protein uS4 (206 aa).

One can recognise an S4 RNA-binding domain in the interval 96-161 (RRLDNVVYRM…QGRIQAALAL (66 aa)).

It belongs to the universal ribosomal protein uS4 family. Part of the 30S ribosomal subunit. Contacts protein S5. The interaction surface between S4 and S5 is involved in control of translational fidelity.

Functionally, one of the primary rRNA binding proteins, it binds directly to 16S rRNA where it nucleates assembly of the body of the 30S subunit. Its function is as follows. With S5 and S12 plays an important role in translational accuracy. The sequence is that of Small ribosomal subunit protein uS4 from Legionella pneumophila (strain Corby).